Here is a 247-residue protein sequence, read N- to C-terminus: 5'-nucleotidase SurE (247 aa).

A divalent metal cation contacts are provided by D8, D9, S39, and N91.

It belongs to the SurE nucleotidase family. It depends on a divalent metal cation as a cofactor.

The protein resides in the cytoplasm. The catalysed reaction is a ribonucleoside 5'-phosphate + H2O = a ribonucleoside + phosphate. Functionally, nucleotidase that shows phosphatase activity on nucleoside 5'-monophosphates. This Chromobacterium violaceum (strain ATCC 12472 / DSM 30191 / JCM 1249 / CCUG 213 / NBRC 12614 / NCIMB 9131 / NCTC 9757 / MK) protein is 5'-nucleotidase SurE.